The following is a 286-amino-acid chain: Pantothenate synthetase (286 aa).

M30–H37 lines the ATP pocket. The active-site Proton donor is H37. Q61 is a binding site for (R)-pantoate. Position 61 (Q61) interacts with beta-alanine. G147 to D150 is an ATP binding site. Position 153 (Q153) interacts with (R)-pantoate. M184–R187 serves as a coordination point for ATP.

This sequence belongs to the pantothenate synthetase family. In terms of assembly, homodimer.

It is found in the cytoplasm. It catalyses the reaction (R)-pantoate + beta-alanine + ATP = (R)-pantothenate + AMP + diphosphate + H(+). Its pathway is cofactor biosynthesis; (R)-pantothenate biosynthesis; (R)-pantothenate from (R)-pantoate and beta-alanine: step 1/1. In terms of biological role, catalyzes the condensation of pantoate with beta-alanine in an ATP-dependent reaction via a pantoyl-adenylate intermediate. The protein is Pantothenate synthetase of Desulfotalea psychrophila (strain LSv54 / DSM 12343).